A 386-amino-acid chain; its full sequence is Flap endonuclease 1 (386 aa).

The tract at residues 1-104 (MGILGLSKLI…GELAKRAERR (104 aa)) is N-domain. Residue D34 coordinates Mg(2+). R47 and R70 together coordinate DNA. Mg(2+) contacts are provided by D86, E158, E160, D179, and D181. Residues 122 to 253 (EIEKFNRRLV…KRAIELINNY (132 aa)) form an I-domain region. E158 contacts DNA. 2 residues coordinate DNA: G231 and D233. D233 contributes to the Mg(2+) binding site. An interaction with PCNA region spans residues 336-344 (TQVRLDSFF). The disordered stretch occupies residues 354–386 (VNAAKRKAEEAKKSANNKKAKTSGGAARGRRPK).

It belongs to the XPG/RAD2 endonuclease family. FEN1 subfamily. In terms of assembly, interacts with PCNA. Three molecules of FEN1 bind to one PCNA trimer with each molecule binding to one PCNA monomer. PCNA stimulates the nuclease activity without altering cleavage specificity. Requires Mg(2+) as cofactor. Post-translationally, phosphorylated. Phosphorylation upon DNA damage induces relocalization to the nuclear plasma.

The protein resides in the nucleus. It is found in the nucleolus. The protein localises to the nucleoplasm. Its subcellular location is the mitochondrion. Functionally, structure-specific nuclease with 5'-flap endonuclease and 5'-3' exonuclease activities involved in DNA replication and repair. During DNA replication, cleaves the 5'-overhanging flap structure that is generated by displacement synthesis when DNA polymerase encounters the 5'-end of a downstream Okazaki fragment. It enters the flap from the 5'-end and then tracks to cleave the flap base, leaving a nick for ligation. Also involved in the long patch base excision repair (LP-BER) pathway, by cleaving within the apurinic/apyrimidinic (AP) site-terminated flap. Acts as a genome stabilization factor that prevents flaps from equilibrating into structures that lead to duplications and deletions. Also possesses 5'-3' exonuclease activity on nicked or gapped double-stranded DNA, and exhibits RNase H activity. Also involved in replication and repair of rDNA and in repairing mitochondrial DNA. The polypeptide is Flap endonuclease 1 (Drosophila pseudoobscura pseudoobscura (Fruit fly)).